We begin with the raw amino-acid sequence, 432 residues long: Serine--tRNA ligase (432 aa).

236 to 238 (TSE) is an L-serine binding site. 267-269 (RSE) serves as a coordination point for ATP. An L-serine-binding site is contributed by Glu-290. Residue 354-357 (EISS) participates in ATP binding. Ser-390 is an L-serine binding site.

It belongs to the class-II aminoacyl-tRNA synthetase family. Type-1 seryl-tRNA synthetase subfamily. In terms of assembly, homodimer. The tRNA molecule binds across the dimer.

The protein resides in the cytoplasm. It catalyses the reaction tRNA(Ser) + L-serine + ATP = L-seryl-tRNA(Ser) + AMP + diphosphate + H(+). The catalysed reaction is tRNA(Sec) + L-serine + ATP = L-seryl-tRNA(Sec) + AMP + diphosphate + H(+). It participates in aminoacyl-tRNA biosynthesis; selenocysteinyl-tRNA(Sec) biosynthesis; L-seryl-tRNA(Sec) from L-serine and tRNA(Sec): step 1/1. Functionally, catalyzes the attachment of serine to tRNA(Ser). Is also able to aminoacylate tRNA(Sec) with serine, to form the misacylated tRNA L-seryl-tRNA(Sec), which will be further converted into selenocysteinyl-tRNA(Sec). This Pseudoalteromonas atlantica (strain T6c / ATCC BAA-1087) protein is Serine--tRNA ligase.